The chain runs to 362 residues: Bifunctional chorismate mutase/prephenate dehydratase (362 aa).

The region spanning 1–92 (MEELKELRKE…ACLSLEKKIK (92 aa)) is the Chorismate mutase domain. The substrate site is built by arginine 8, arginine 25, lysine 36, and glutamate 49. Residues 93–267 (VAYLGPKATF…NFTRFLVIAK (175 aa)) form the Prephenate dehydratase domain. One can recognise an ACT domain in the interval 279 to 356 (SILFGVKDEP…QFLKVLGSYP (78 aa)).

The protein resides in the cytoplasm. It carries out the reaction chorismate = prephenate. The enzyme catalyses prephenate + H(+) = 3-phenylpyruvate + CO2 + H2O. Its pathway is amino-acid biosynthesis; L-phenylalanine biosynthesis; phenylpyruvate from prephenate: step 1/1. The protein operates within metabolic intermediate biosynthesis; prephenate biosynthesis; prephenate from chorismate: step 1/1. In terms of biological role, catalyzes the Claisen rearrangement of chorismate to prephenate and the decarboxylation/dehydration of prephenate to phenylpyruvate. The polypeptide is Bifunctional chorismate mutase/prephenate dehydratase (pheA) (Aquifex aeolicus (strain VF5)).